A 492-amino-acid polypeptide reads, in one-letter code: Prostaglandin E2 receptor EP4 subtype (492 aa).

The Extracellular portion of the chain corresponds to 1 to 19 (MSIPGTNASSSQASNPLNS). The N-linked (GlcNAc...) asparagine glycan is linked to Asn7. A helical transmembrane segment spans residues 20 to 43 (PVTIPAVMFIFGVVGNLVAIVVLC). Topologically, residues 44-55 (KSRKEQKETTFY) are cytoplasmic. A helical transmembrane segment spans residues 56–79 (TLVCGLAVTDLLGTLLVSPVTIAT). The Extracellular segment spans residues 80-96 (YLKGQWPGGHALCEYST). A disulfide bridge connects residues Cys92 and Cys170. A helical transmembrane segment spans residues 97 to 115 (FILLFFGLSGLSIICAMSI). The Cytoplasmic portion of the chain corresponds to 116 to 135 (ERYLAINHAYFYSHYVDKRL). The helical transmembrane segment at 136-160 (AGLTLFAVYASNVLFCALPSMGLGS) threads the bilayer. Topologically, residues 161-184 (SRLQYPATWCFIDWTTNVTAHAAF) are extracellular. Residues 185-211 (SYMYAGFSSFLILATVLCNVLVCGALL) form a helical membrane-spanning segment. Over 212–273 (RMHRQFMRRT…RSFRRIAGAE (62 aa)) the chain is Cytoplasmic. Residues 274–301 (IQMVILLIATSLVVLICSIPLVVRVFVN) form a helical membrane-spanning segment. Residues 302-318 (QLYRPQLEPVIGKNPDL) are Extracellular-facing. The chain crosses the membrane as a helical span at residues 319-338 (QAIRIASVSPILDPWIYILL). Over 339–492 (RKTVLSKAIE…ETLNLSEKCI (154 aa)) the chain is Cytoplasmic. The span at 361–374 (RRERSGPHCSDSRR) shows a compositional bias: basic and acidic residues. Residues 361-383 (RRERSGPHCSDSRRTSSAVSGHS) form a disordered region. Phosphoserine is present on residues Ser380, Ser383, Ser385, and Ser388.

Belongs to the G-protein coupled receptor 1 family. Interacts with FEM1A. In terms of processing, phosphorylation mediates agonist-mediated desensitization by promoting cytoplasmic retention.

It localises to the cell membrane. Receptor for prostaglandin E2 (PGE2). The activity of this receptor is mediated by G(s) proteins that stimulate adenylate cyclase. Has a relaxing effect on smooth muscle. May play an important role in regulating renal hemodynamics, intestinal epithelial transport, adrenal aldosterone secretion, and uterine function. The protein is Prostaglandin E2 receptor EP4 subtype (PTGER4) of Bos taurus (Bovine).